The following is a 490-amino-acid chain: Prostaglandin E2 receptor EP4 subtype (490 aa).

Residues 1 to 19 (MSTPGVNASASLSPDRLNS) lie on the Extracellular side of the membrane. A glycan (N-linked (GlcNAc...) asparagine) is linked at Asn7. The chain crosses the membrane as a helical span at residues 20–43 (PVTIPAVMFIFGVVGNLVAIVVLC). At 44 to 55 (KSRKEQKETTFY) the chain is on the cytoplasmic side. The helical transmembrane segment at 56–79 (TLVCGLAVTDLLGTLLVSPVTIAT) threads the bilayer. The Extracellular segment spans residues 80–96 (YMKGQWPGGQPLCEYST). The cysteines at positions 92 and 170 are disulfide-linked. A helical membrane pass occupies residues 97-115 (FILLFFSLSGLSIICAMSV). Residues 116–135 (ERYLAINHAYFYSHYVDKRL) lie on the Cytoplasmic side of the membrane. The chain crosses the membrane as a helical span at residues 136–160 (AGLTLFAVYASNVLFCALPNMGLGS). Residues 161–184 (SRLQYPDTWCFIDWTTNVTAHAAY) lie on the Extracellular side of the membrane. Residues 185 to 211 (SYMYAGFSSFLILATVLCNVLVCGALL) traverse the membrane as a helical segment. Topologically, residues 212-269 (RMHRQFMRRTSLGTEQHHAAAAAVTSVASRGHPAASPALPRLSDFRRRRSFRRIAGAE) are cytoplasmic. A helical transmembrane segment spans residues 270–297 (IQMVILLIATSLVVLICSIPLVVRVFVN). Residues 298 to 314 (QLYQPSLEREVSKNPDL) are Extracellular-facing. A helical transmembrane segment spans residues 315–334 (QAIRIASVNPILDPWIYILL). Residues 335–490 (RKTVLSKAIE…ETLNLSEKCI (156 aa)) are Cytoplasmic-facing. The segment at 359–378 (ERSGQHCSDSQRTSSAMSGH) is disordered. A compositionally biased stretch (polar residues) spans 363–378 (QHCSDSQRTSSAMSGH). A phosphoserine mark is found at Ser376, Ser379, Ser381, and Ser384. The segment covering 439 to 451 (SETSDSSQGQDSE) has biased composition (polar residues). The disordered stretch occupies residues 439 to 477 (SETSDSSQGQDSESVLLVDEAGGSGRAGPAPKGSSLQVT).

Belongs to the G-protein coupled receptor 1 family. In terms of assembly, interacts with FEM1A. Post-translationally, phosphorylation mediates agonist-mediated desensitization by promoting cytoplasmic retention.

Its subcellular location is the cell membrane. Its function is as follows. Receptor for prostaglandin E2 (PGE2). The activity of this receptor is mediated by G(s) proteins that stimulate adenylate cyclase. Has a relaxing effect on smooth muscle. May play an important role in regulating renal hemodynamics, intestinal epithelial transport, adrenal aldosterone secretion, and uterine function. The chain is Prostaglandin E2 receptor EP4 subtype (PTGER4) from Pan troglodytes (Chimpanzee).